The primary structure comprises 227 residues: Deoxyribose-phosphate aldolase (227 aa).

The active-site Proton donor/acceptor is Asp96. Lys158 functions as the Schiff-base intermediate with acetaldehyde in the catalytic mechanism. The active-site Proton donor/acceptor is the Lys187.

Belongs to the DeoC/FbaB aldolase family. DeoC type 1 subfamily.

It is found in the cytoplasm. It catalyses the reaction 2-deoxy-D-ribose 5-phosphate = D-glyceraldehyde 3-phosphate + acetaldehyde. It functions in the pathway carbohydrate degradation; 2-deoxy-D-ribose 1-phosphate degradation; D-glyceraldehyde 3-phosphate and acetaldehyde from 2-deoxy-alpha-D-ribose 1-phosphate: step 2/2. In terms of biological role, catalyzes a reversible aldol reaction between acetaldehyde and D-glyceraldehyde 3-phosphate to generate 2-deoxy-D-ribose 5-phosphate. The chain is Deoxyribose-phosphate aldolase from Desulfotalea psychrophila (strain LSv54 / DSM 12343).